Here is a 280-residue protein sequence, read N- to C-terminus: Putative pyruvate, phosphate dikinase regulatory protein (280 aa).

Residue Gly156–Thr163 participates in ADP binding.

The protein belongs to the pyruvate, phosphate/water dikinase regulatory protein family. PDRP subfamily.

The catalysed reaction is N(tele)-phospho-L-histidyl/L-threonyl-[pyruvate, phosphate dikinase] + ADP = N(tele)-phospho-L-histidyl/O-phospho-L-threonyl-[pyruvate, phosphate dikinase] + AMP + H(+). It catalyses the reaction N(tele)-phospho-L-histidyl/O-phospho-L-threonyl-[pyruvate, phosphate dikinase] + phosphate + H(+) = N(tele)-phospho-L-histidyl/L-threonyl-[pyruvate, phosphate dikinase] + diphosphate. Bifunctional serine/threonine kinase and phosphorylase involved in the regulation of the pyruvate, phosphate dikinase (PPDK) by catalyzing its phosphorylation/dephosphorylation. The chain is Putative pyruvate, phosphate dikinase regulatory protein from Hyphomonas neptunium (strain ATCC 15444).